Here is a 217-residue protein sequence, read N- to C-terminus: Thiamine-phosphate synthase (217 aa).

4-amino-2-methyl-5-(diphosphooxymethyl)pyrimidine contacts are provided by residues Gln-37 to Lys-41 and Asn-72. Asp-73 and Asp-92 together coordinate Mg(2+). Ser-110 lines the 4-amino-2-methyl-5-(diphosphooxymethyl)pyrimidine pocket. Thr-136–Ser-138 serves as a coordination point for 2-[(2R,5Z)-2-carboxy-4-methylthiazol-5(2H)-ylidene]ethyl phosphate. Lys-139 serves as a coordination point for 4-amino-2-methyl-5-(diphosphooxymethyl)pyrimidine. Residues Gly-168 and Ile-188–Ser-189 each bind 2-[(2R,5Z)-2-carboxy-4-methylthiazol-5(2H)-ylidene]ethyl phosphate.

This sequence belongs to the thiamine-phosphate synthase family. Mg(2+) is required as a cofactor.

The catalysed reaction is 2-[(2R,5Z)-2-carboxy-4-methylthiazol-5(2H)-ylidene]ethyl phosphate + 4-amino-2-methyl-5-(diphosphooxymethyl)pyrimidine + 2 H(+) = thiamine phosphate + CO2 + diphosphate. It catalyses the reaction 2-(2-carboxy-4-methylthiazol-5-yl)ethyl phosphate + 4-amino-2-methyl-5-(diphosphooxymethyl)pyrimidine + 2 H(+) = thiamine phosphate + CO2 + diphosphate. The enzyme catalyses 4-methyl-5-(2-phosphooxyethyl)-thiazole + 4-amino-2-methyl-5-(diphosphooxymethyl)pyrimidine + H(+) = thiamine phosphate + diphosphate. It functions in the pathway cofactor biosynthesis; thiamine diphosphate biosynthesis; thiamine phosphate from 4-amino-2-methyl-5-diphosphomethylpyrimidine and 4-methyl-5-(2-phosphoethyl)-thiazole: step 1/1. Functionally, condenses 4-methyl-5-(beta-hydroxyethyl)thiazole monophosphate (THZ-P) and 2-methyl-4-amino-5-hydroxymethyl pyrimidine pyrophosphate (HMP-PP) to form thiamine monophosphate (TMP). This chain is Thiamine-phosphate synthase, found in Anoxybacillus flavithermus (strain DSM 21510 / WK1).